We begin with the raw amino-acid sequence, 487 residues long: Iron-sulfur cluster assembly SufBD family protein ycf24 (487 aa).

This sequence belongs to the iron-sulfur cluster assembly SufBD family.

The protein localises to the plastid. It is found in the chloroplast. This Pyropia yezoensis (Susabi-nori) protein is Iron-sulfur cluster assembly SufBD family protein ycf24 (ycf24).